Here is a 1556-residue protein sequence, read N- to C-terminus: Pentafunctional AROM polypeptide (1556 aa).

Residues 1–387 (MFAEGQIQKV…HEQKASSVAD (387 aa)) form a 3-dehydroquinate synthase region. NAD(+) contacts are provided by residues 46–48 (DTN), 84–87 (ETSK), 115–117 (GGV), and aspartate 120. Arginine 131 contacts 7-phospho-2-dehydro-3-deoxy-D-arabino-heptonate. 140 to 141 (TT) provides a ligand contact to NAD(+). Positions 147 and 153 each coordinate 7-phospho-2-dehydro-3-deoxy-D-arabino-heptonate. Position 162 (lysine 162) interacts with NAD(+). Asparagine 163 provides a ligand contact to 7-phospho-2-dehydro-3-deoxy-D-arabino-heptonate. Residues 180–183 (FLET) and asparagine 191 each bind NAD(+). Glutamate 195 serves as a coordination point for Zn(2+). 7-phospho-2-dehydro-3-deoxy-D-arabino-heptonate-binding positions include 195–198 (EVIK) and lysine 253. Glutamate 263 (proton acceptor; for 3-dehydroquinate synthase activity) is an active-site residue. 7-phospho-2-dehydro-3-deoxy-D-arabino-heptonate is bound by residues 267–271 (RNLLN) and histidine 274. Residue histidine 274 coordinates Zn(2+). Histidine 278 functions as the Proton acceptor; for 3-dehydroquinate synthase activity in the catalytic mechanism. 7-phospho-2-dehydro-3-deoxy-D-arabino-heptonate contacts are provided by histidine 290 and lysine 359. Histidine 290 provides a ligand contact to Zn(2+). The interval 400-837 (VGEAPVGDKK…WDVLSGVFNV (438 aa)) is EPSP synthase. Residue cysteine 819 is the For EPSP synthase activity of the active site. Positions 858-1049 (PSIFIVGMRG…HKDQFTSFLS (192 aa)) are shikimate kinase. Residue 864-871 (GMRGAGKT) coordinates ATP. Positions 1050-1266 (LTFPDVSIAA…AAPGQLSVEE (217 aa)) are 3-dehydroquinase. Residue histidine 1171 is the Proton acceptor; for 3-dehydroquinate dehydratase activity of the active site. Residue lysine 1200 is the Schiff-base intermediate with substrate; for 3-dehydroquinate dehydratase activity of the active site. A shikimate dehydrogenase region spans residues 1279–1556 (KNLSFFIVGT…EVGEKAVLGN (278 aa)).

This sequence in the N-terminal section; belongs to the sugar phosphate cyclases superfamily. Dehydroquinate synthase family. It in the 2nd section; belongs to the EPSP synthase family. The protein in the 3rd section; belongs to the shikimate kinase family. In the 4th section; belongs to the type-I 3-dehydroquinase family. This sequence in the C-terminal section; belongs to the shikimate dehydrogenase family. In terms of assembly, homodimer. The cofactor is Zn(2+).

The protein localises to the cytoplasm. It catalyses the reaction 7-phospho-2-dehydro-3-deoxy-D-arabino-heptonate = 3-dehydroquinate + phosphate. The catalysed reaction is 3-dehydroquinate = 3-dehydroshikimate + H2O. It carries out the reaction shikimate + NADP(+) = 3-dehydroshikimate + NADPH + H(+). The enzyme catalyses shikimate + ATP = 3-phosphoshikimate + ADP + H(+). It catalyses the reaction 3-phosphoshikimate + phosphoenolpyruvate = 5-O-(1-carboxyvinyl)-3-phosphoshikimate + phosphate. The protein operates within metabolic intermediate biosynthesis; chorismate biosynthesis; chorismate from D-erythrose 4-phosphate and phosphoenolpyruvate: step 2/7. Its pathway is metabolic intermediate biosynthesis; chorismate biosynthesis; chorismate from D-erythrose 4-phosphate and phosphoenolpyruvate: step 3/7. It functions in the pathway metabolic intermediate biosynthesis; chorismate biosynthesis; chorismate from D-erythrose 4-phosphate and phosphoenolpyruvate: step 4/7. It participates in metabolic intermediate biosynthesis; chorismate biosynthesis; chorismate from D-erythrose 4-phosphate and phosphoenolpyruvate: step 5/7. The protein operates within metabolic intermediate biosynthesis; chorismate biosynthesis; chorismate from D-erythrose 4-phosphate and phosphoenolpyruvate: step 6/7. Functionally, the AROM polypeptide catalyzes 5 consecutive enzymatic reactions in prechorismate polyaromatic amino acid biosynthesis. The chain is Pentafunctional AROM polypeptide from Yarrowia lipolytica (strain CLIB 122 / E 150) (Yeast).